The primary structure comprises 197 residues: Nucleoid occlusion factor SlmA (197 aa).

An HTH tetR-type domain is found at 6 to 66 (NDRRTQILQA…GLIEFIEESL (61 aa)). The H-T-H motif DNA-binding region spans 29–48 (TTAALAKQVGVSEAALYRHF).

It belongs to the nucleoid occlusion factor SlmA family. Homodimer. Interacts with FtsZ.

The protein localises to the cytoplasm. It is found in the nucleoid. Required for nucleoid occlusion (NO) phenomenon, which prevents Z-ring formation and cell division over the nucleoid. Acts as a DNA-associated cell division inhibitor that binds simultaneously chromosomal DNA and FtsZ, and disrupts the assembly of FtsZ polymers. SlmA-DNA-binding sequences (SBS) are dispersed on non-Ter regions of the chromosome, preventing FtsZ polymerization at these regions. The protein is Nucleoid occlusion factor SlmA of Marinomonas sp. (strain MWYL1).